The sequence spans 953 residues: Calcium-transporting ATPase type 2C member 1 (953 aa).

Residues 1 to 104 (MDNLLPQSRF…NEFDISEDEP (104 aa)) lie on the Cytoplasmic side of the membrane. Residues 105–125 (LWKKYISQFKNPLIMLLLASA) traverse the membrane as a helical segment. Residues 126 to 138 (VISVLMHQFDDAV) lie on the Lumenal side of the membrane. A helical transmembrane segment spans residues 139–157 (SITVAILIVVTVAFVQEYR). Over 158–296 (SEKSLEELSK…APKTPLQKSM (139 aa)) the chain is Cytoplasmic. The chain crosses the membrane as a helical span at residues 297-316 (DLLGKQLSFYSFGIIGIIML). Topologically, residues 317–328 (VGWLLGKDILEM) are lumenal. A helical transmembrane segment spans residues 329-346 (FTISVSLAVAAIPEGLPI). Residues V337, A338, I340, and E342 each contribute to the Ca(2+) site. Residues 347-733 (VVTVTLALGV…EEGKGIYNNI (387 aa)) lie on the Cytoplasmic side of the membrane. D384 (4-aspartylphosphate intermediate) is an active-site residue. Mg(2+) is bound by residues D678 and D682. A helical membrane pass occupies residues 734-753 (KNFVRFQLSTSIAALTLISL). Over 754–763 (ATLMNFPNPL) the chain is Lumenal. A helical transmembrane segment spans residues 764-784 (NAMQILWINIIMDGPPAQSLG). N772 and D776 together coordinate Ca(2+). The Cytoplasmic portion of the chain corresponds to 785-804 (VEPVDKDVIRKPPRNWKDSI). A helical membrane pass occupies residues 805–824 (LTKNLILKILVSSIIIVCGT). At 825 to 842 (LFVFWRELRDNVITPRDT) the chain is on the lumenal side. The chain crosses the membrane as a helical span at residues 843–862 (TMTFTCFVFFDMFNALSSRS). The Cytoplasmic segment spans residues 863 to 875 (QTKSVFEIGLCSN). The chain crosses the membrane as a helical span at residues 876–894 (KMFCYAVLGSIMGQLLVIY). At 895–909 (FPPLQKVFQTESLSI) the chain is on the lumenal side. A helical membrane pass occupies residues 910 to 930 (LDLLFLLGLTSSVCIVAEIIK). The Cytoplasmic segment spans residues 931–953 (KVERSREKIQKPVSSTSSSFLEV).

Belongs to the cation transport ATPase (P-type) (TC 3.A.3) family. Type IIA subfamily. Monomer. Homodimer.

The protein localises to the golgi apparatus. It is found in the trans-Golgi network membrane. Its subcellular location is the golgi stack membrane. It carries out the reaction Ca(2+)(in) + ATP + H2O = Ca(2+)(out) + ADP + phosphate + H(+). The catalysed reaction is Mn(2+)(in) + ATP + H2O = Mn(2+)(out) + ADP + phosphate + H(+). In terms of biological role, ATP-driven pump that supplies the Golgi apparatus with Ca(2+) and Mn(2+) ions, both essential cofactors for processing and trafficking of newly synthesized proteins in the secretory pathway. Within a catalytic cycle, acquires Ca(2+) or Mn(2+) ions on the cytoplasmic side of the membrane and delivers them to the lumenal side. The transfer of ions across the membrane is coupled to ATP hydrolysis and is associated with a transient phosphorylation that shifts the pump conformation from inward-facing to outward-facing state. Plays a primary role in the maintenance of Ca(2+) homeostasis in the trans-Golgi compartment with a functional impact on Golgi and post-Golgi protein sorting as well as a structural impact on cisternae morphology. Responsible for loading the Golgi stores with Ca(2+) ions in keratinocytes, contributing to keratinocyte differentiation and epidermis integrity. Participates in Ca(2+) and Mn(2+) ions uptake into the Golgi store of hippocampal neurons and regulates protein trafficking required for neural polarity. May also play a role in the maintenance of Ca(2+) and Mn(2+) homeostasis and signaling in the cytosol while preventing cytotoxicity. This is Calcium-transporting ATPase type 2C member 1 (ATP2C1) from Bos taurus (Bovine).